Here is a 688-residue protein sequence, read N- to C-terminus: Polyphosphate kinase (688 aa).

Residue N45 participates in ATP binding. Residues R375 and R405 each coordinate Mg(2+). Positions 430–464 constitute a PLD phosphodiesterase domain; that stretch reads PGLKIHAKLFLISRKENGEVVRYAHIGTGNFNEKT. Residue H435 is the Phosphohistidine intermediate of the active site. The ATP site is built by Y468, R564, and H592.

This sequence belongs to the polyphosphate kinase 1 (PPK1) family. The cofactor is Mg(2+). An intermediate of this reaction is the autophosphorylated ppk in which a phosphate is covalently linked to a histidine residue through a N-P bond.

The enzyme catalyses [phosphate](n) + ATP = [phosphate](n+1) + ADP. In terms of biological role, catalyzes the reversible transfer of the terminal phosphate of ATP to form a long-chain polyphosphate (polyP). This chain is Polyphosphate kinase, found in Escherichia coli O157:H7.